Here is a 491-residue protein sequence, read N- to C-terminus: Cytochrome P450 2B3 (491 aa).

Cys436 serves as a coordination point for heme.

The protein belongs to the cytochrome P450 family. It depends on heme as a cofactor. Liver. Not found in the lung, kidney and prostate.

Its subcellular location is the endoplasmic reticulum membrane. The protein resides in the microsome membrane. It carries out the reaction an organic molecule + reduced [NADPH--hemoprotein reductase] + O2 = an alcohol + oxidized [NADPH--hemoprotein reductase] + H2O + H(+). Cytochromes P450 are a group of heme-thiolate monooxygenases. In liver microsomes, this enzyme is involved in an NADPH-dependent electron transport pathway. It oxidizes a variety of structurally unrelated compounds, including steroids, fatty acids, and xenobiotics. In Rattus norvegicus (Rat), this protein is Cytochrome P450 2B3 (Cyp2b3).